We begin with the raw amino-acid sequence, 858 residues long: Bifunctional uridylyltransferase/uridylyl-removing enzyme (858 aa).

The interval 1 to 324 (MSASVAEPPP…PATSGVTRVL (324 aa)) is uridylyltransferase. The interval 325 to 681 (SPGRFVEKQG…ARPSPVGDAL (357 aa)) is uridylyl-removing. The HD domain maps to 443–565 (VDQHILMVLR…VGSERRLTAL (123 aa)). 2 ACT domains span residues 682–761 (QVLV…PEPS) and 790–858 (ILSV…AIAV).

This sequence belongs to the GlnD family. Mg(2+) serves as cofactor.

It carries out the reaction [protein-PII]-L-tyrosine + UTP = [protein-PII]-uridylyl-L-tyrosine + diphosphate. It catalyses the reaction [protein-PII]-uridylyl-L-tyrosine + H2O = [protein-PII]-L-tyrosine + UMP + H(+). Its activity is regulated as follows. Uridylyltransferase (UTase) activity is inhibited by glutamine, while glutamine activates uridylyl-removing (UR) activity. Modifies, by uridylylation and deuridylylation, the PII regulatory proteins (GlnB and homologs), in response to the nitrogen status of the cell that GlnD senses through the glutamine level. Under low glutamine levels, catalyzes the conversion of the PII proteins and UTP to PII-UMP and PPi, while under higher glutamine levels, GlnD hydrolyzes PII-UMP to PII and UMP (deuridylylation). Thus, controls uridylylation state and activity of the PII proteins, and plays an important role in the regulation of nitrogen assimilation and metabolism. The polypeptide is Bifunctional uridylyltransferase/uridylyl-removing enzyme (Burkholderia mallei (strain NCTC 10247)).